The primary structure comprises 443 residues: MAKKYFGTDGIRGAVNSKNINGDMFFKFGLATGTYFKTQKKKKQIAIIAKDTRLSGYSLEPALVSGLTSAGMHVYTLGPLPTNGLAMLTKSMKANMGIMITASHNPYHDNGLKLFGPDGLKLSNKIEKKIETLIDQKIEKSLSKPKKLGRVKRLETANKDYIKILKNNLPKDFNLRGLRIVIDCANGAGYKAGPELLKSLGAKVFSIGINPNGLNINKNCGSTFPNKIRLAVKRYKAHIGISLDGDADRIIMCDEKGIVIDGDQIIAAIAMRWKRKKMLKGGVVGTLMSNYGLEKFFKLHNIKFLRSNVGDRFVKEKMQKNNFNLGGEQSGHIILGKFATTGDGLLVALEVLFSLRKGKKASSFFNTFNKTPQILENIDVKDKNIIKNIDIKNSIKLAEKLIKGQGRILVRSSGTESKIRVMGESDNIKLLQKCLKIVLRKIK.

The active-site Phosphoserine intermediate is the Ser103. Residues Ser103, Asp244, Asp246, and Asp248 each coordinate Mg(2+). Ser103 is modified (phosphoserine).

The protein belongs to the phosphohexose mutase family. Mg(2+) is required as a cofactor. Activated by phosphorylation.

The catalysed reaction is alpha-D-glucosamine 1-phosphate = D-glucosamine 6-phosphate. Functionally, catalyzes the conversion of glucosamine-6-phosphate to glucosamine-1-phosphate. This Pelagibacter ubique (strain HTCC1062) protein is Phosphoglucosamine mutase.